Here is a 349-residue protein sequence, read N- to C-terminus: Isopentenyl-diphosphate delta-isomerase (349 aa).

Position 6–7 (6–7) interacts with substrate; sequence RK. FMN contacts are provided by residues 62–64, S93, and N122; that span reads AMT. Residue Q152 participates in substrate binding. E153 is a binding site for Mg(2+). FMN is bound by residues K184, T214, 258 to 259, and 280 to 281; these read GG and AG.

The protein belongs to the IPP isomerase type 2 family. As to quaternary structure, homooctamer. Dimer of tetramers. It depends on FMN as a cofactor. NADPH is required as a cofactor. Mg(2+) serves as cofactor.

It localises to the cytoplasm. The catalysed reaction is isopentenyl diphosphate = dimethylallyl diphosphate. Functionally, involved in the biosynthesis of isoprenoids. Catalyzes the 1,3-allylic rearrangement of the homoallylic substrate isopentenyl (IPP) to its allylic isomer, dimethylallyl diphosphate (DMAPP). The polypeptide is Isopentenyl-diphosphate delta-isomerase (Bacillus mycoides (strain KBAB4) (Bacillus weihenstephanensis)).